Consider the following 441-residue polypeptide: ATP-dependent RNA helicase RhlB (441 aa).

The short motif at 9-37 (QKFADFSLNKEIKTALNESGFEFCTPIQA) is the Q motif element. Positions 40 to 219 (LPILLQKKDI…YDHMNEPEKV (180 aa)) constitute a Helicase ATP-binding domain. 53 to 60 (AQTGTGKT) contributes to the ATP binding site. The DEAD box motif lies at 165 to 168 (DEAD). Residues 243-390 (KMRLLLSLIE…VTNYDSEGLL (148 aa)) enclose the Helicase C-terminal domain. The segment at 401-441 (RKHNNRPQQGRNNSGRPQGRNGNRAGGRNGPRRHDQVRRHS) is disordered.

This sequence belongs to the DEAD box helicase family. RhlB subfamily. Component of the RNA degradosome, which is a multiprotein complex involved in RNA processing and mRNA degradation.

Its subcellular location is the cytoplasm. It carries out the reaction ATP + H2O = ADP + phosphate + H(+). In terms of biological role, DEAD-box RNA helicase involved in RNA degradation. Has RNA-dependent ATPase activity and unwinds double-stranded RNA. The sequence is that of ATP-dependent RNA helicase RhlB from Shewanella woodyi (strain ATCC 51908 / MS32).